We begin with the raw amino-acid sequence, 443 residues long: Threonine/serine transporter TdcC (443 aa).

The next 11 helical transmembrane spans lie at 24–44, 45–65, 95–115, 140–160, 163–183, 207–227, 259–279, 319–339, 363–383, 385–405, and 423–443; these read WVLGLFGTAIGAGVLFFPISA, GIGGLLPIIFMLILAFPIAFF, VGGVVITFLYFFAICPLLWIY, VVALAILLVMAFFIYFGKDLM, VMGYLVFPFITCLVLISLSLI, ILVTVWLGIAIMVFSFNFSPI, ASVLMVVVVMFFAFSCLFTLS, ASIIALVAIFKSFFGHYLGTL, LNMISMVIIMGSTWVIAYINP, ILDLIGAMGAPIIAALLCLLP, and SNYFVTIIGLLTILNIVYQLM.

Belongs to the amino acid/polyamine transporter 2 family. SdaC/TdcC subfamily.

Its subcellular location is the cell inner membrane. The catalysed reaction is L-threonine(in) + H(+)(in) = L-threonine(out) + H(+)(out). The enzyme catalyses L-serine(in) + H(+)(in) = L-serine(out) + H(+)(out). Functionally, involved in the import of threonine and serine into the cell, with the concomitant import of a proton (symport system). The protein is Threonine/serine transporter TdcC of Edwardsiella tarda.